We begin with the raw amino-acid sequence, 76 residues long: DNA-directed RNA polymerase subunit epsilon (76 aa).

The protein belongs to the RNA polymerase subunit epsilon family. In terms of assembly, RNAP is composed of a core of 2 alpha, a beta and a beta' subunit. The core is associated with a delta subunit, and at least one of epsilon or omega. When a sigma factor is associated with the core the holoenzyme is formed, which can initiate transcription.

It catalyses the reaction RNA(n) + a ribonucleoside 5'-triphosphate = RNA(n+1) + diphosphate. A non-essential component of RNA polymerase (RNAP). In Streptococcus equi subsp. equi (strain 4047), this protein is DNA-directed RNA polymerase subunit epsilon.